A 121-amino-acid chain; its full sequence is uncharacterized protein (121 aa).

The segment at 85-111 (NANNDDYESPYKTPKIKSNPSLDSSGS) is disordered. The segment covering 100–111 (IKSNPSLDSSGS) has biased composition (polar residues).

This is an uncharacterized protein from Dictyostelium discoideum (Social amoeba).